We begin with the raw amino-acid sequence, 811 residues long: E3 ubiquitin-protein ligase RNF10 (811 aa).

The span at 1–10 (MPLSSPNAAA) shows a compositional bias: polar residues. Positions 1-119 (MPLSSPNAAA…SFNGGRRDEV (119 aa)) are disordered. The residue at position 5 (serine 5) is a Phosphoserine. Composition is skewed to low complexity over residues 18–31 (NSGS…SGSS), 78–90 (NNQS…QKSK), and 104–113 (SKLFSSSFNG). The interval 101 to 185 (GGSSKLFSSS…FNKELFLQAN (85 aa)) is interaction with MEOX2. Phosphoserine occurs at positions 110 and 128. The RING-type zinc-finger motif lies at 225–267 (CPICLYPPTAAKITRCGHIFCWACILHYLSLSEKTWSKCPICY). Positions 653–662 (DSALGPTSTE) are enriched in polar residues. Disordered regions lie at residues 653 to 672 (DSAL…ISPL), 724 to 761 (DVWP…VPSF), and 776 to 811 (LDTP…VHTK). The span at 724-736 (DVWPKTAPKKDEN) shows a compositional bias: basic and acidic residues. The span at 802-811 (LFSTSVVHTK) shows a compositional bias: polar residues.

Belongs to the RNF10 family. In terms of assembly, interacts with MEOX2.

The protein resides in the cytoplasm. The protein localises to the nucleus. It catalyses the reaction S-ubiquitinyl-[E2 ubiquitin-conjugating enzyme]-L-cysteine + [acceptor protein]-L-lysine = [E2 ubiquitin-conjugating enzyme]-L-cysteine + N(6)-ubiquitinyl-[acceptor protein]-L-lysine.. It participates in protein modification; protein ubiquitination. In terms of biological role, E3 ubiquitin-protein ligase that catalyzes monoubiquitination of 40S ribosomal proteins RPS2/us5 and RPS3/us3 in response to ribosome stalling. Part of a ribosome quality control that takes place when ribosomes have stalled during translation initiation (iRQC): RNF10 acts by mediating monoubiquitination of RPS2/us5 and RPS3/us3, promoting their degradation by the proteasome. Also promotes ubiquitination of 40S ribosomal proteins in response to ribosome stalling during translation elongation. The action of RNF10 in iRQC is counteracted by USP10. May also act as a transcriptional factor involved in the regulation of MAG (Myelin-associated glycoprotein) expression. Acts as a regulator of Schwann cell differentiation and myelination. This Homo sapiens (Human) protein is E3 ubiquitin-protein ligase RNF10.